A 251-amino-acid chain; its full sequence is Ditrans,polycis-undecaprenyl-diphosphate synthase ((2E,6E)-farnesyl-diphosphate specific) (251 aa).

Asp20 is an active-site residue. Asp20 lines the Mg(2+) pocket. Residues 21–24 (GNGR), Trp25, Arg33, His37, and 65–67 (SSE) contribute to the substrate site. Asn68 serves as the catalytic Proton acceptor. Substrate contacts are provided by residues Trp69, Arg71, Arg188, and 194 to 196 (RIS). Residue Glu207 coordinates Mg(2+).

This sequence belongs to the UPP synthase family. As to quaternary structure, homodimer. Mg(2+) serves as cofactor.

The catalysed reaction is 8 isopentenyl diphosphate + (2E,6E)-farnesyl diphosphate = di-trans,octa-cis-undecaprenyl diphosphate + 8 diphosphate. Catalyzes the sequential condensation of isopentenyl diphosphate (IPP) with (2E,6E)-farnesyl diphosphate (E,E-FPP) to yield (2Z,6Z,10Z,14Z,18Z,22Z,26Z,30Z,34E,38E)-undecaprenyl diphosphate (di-trans,octa-cis-UPP). UPP is the precursor of glycosyl carrier lipid in the biosynthesis of bacterial cell wall polysaccharide components such as peptidoglycan and lipopolysaccharide. The chain is Ditrans,polycis-undecaprenyl-diphosphate synthase ((2E,6E)-farnesyl-diphosphate specific) from Vibrio parahaemolyticus serotype O3:K6 (strain RIMD 2210633).